Here is a 463-residue protein sequence, read N- to C-terminus: V-type proton ATPase subunit S1 (463 aa).

An N-terminal signal peptide occupies residues 1–32 (MMAATVVSRIRTGTGRAPVMWLSLSLVAVAAA). A propeptide spanning residues 33-225 (VATEQQVPLV…TAVRPSRVAR (193 aa)) is cleaved from the precursor. Residues 33–412 (VATEQQVPLV…EQFSYASDCA (380 aa)) are Lumenal-facing. N-linked (GlcNAc...) asparagine glycosylation is found at Asn-164, Asn-255, Asn-267, Asn-290, Asn-297, Asn-344, Asn-351, and Asn-399. The cysteines at positions 365 and 411 are disulfide-linked. The helical transmembrane segment at 413-433 (GFFSPGIWMGLLTTLFMLFIF) threads the bilayer. Topologically, residues 434–463 (TYGLHMILSLKTMDRFDDHKGPTITLTQIV) are cytoplasmic.

The protein belongs to the vacuolar ATPase subunit S1 family. In terms of assembly, accessory component of the multisubunit proton-transporting vacuolar (V)-ATPase protein pump. Interacts (via N-terminus) with ATP6AP2 (via N-terminus). Interacts with RNASEK. Interacts with TMEM106B (via C-terminus). N-glycosylated. In terms of tissue distribution, expressed in brain cortex (at protein level). Highly expressed in islets of Langerhans. Expressed in pancreatic acini, pituitary gland, adrenal gland, lung, brain and bone marrow.

Its subcellular location is the endoplasmic reticulum membrane. The protein resides in the endoplasmic reticulum-Golgi intermediate compartment membrane. The protein localises to the cytoplasmic vesicle. It is found in the secretory vesicle. It localises to the synaptic vesicle membrane. Its subcellular location is the clathrin-coated vesicle membrane. Its function is as follows. Accessory subunit of the proton-transporting vacuolar (V)-ATPase protein pump, which is required for luminal acidification of secretory vesicles. Guides the V-type ATPase into specialized subcellular compartments, such as neuroendocrine regulated secretory vesicles or the ruffled border of the osteoclast, thereby regulating its activity. Involved in membrane trafficking and Ca(2+)-dependent membrane fusion. May play a role in the assembly of the V-type ATPase complex. In aerobic conditions, involved in intracellular iron homeostasis, thus triggering the activity of Fe(2+) prolyl hydroxylase (PHD) enzymes, and leading to HIF1A hydroxylation and subsequent proteasomal degradation. In islets of Langerhans cells, may regulate the acidification of dense-core secretory granules. This Mus musculus (Mouse) protein is V-type proton ATPase subunit S1 (Atp6ap1).